Reading from the N-terminus, the 348-residue chain is Nuclear receptor subfamily 1 group I member 3 (348 aa).

The nuclear receptor DNA-binding region spans 8–83; it reads LRNCVVCGDQ…AGMRKDMILS (76 aa). The NR C4-type zinc-finger motif lies at 11–31; sequence CVVCGDQATGYHFNALTCEGC. Thr38 bears the Phosphothreonine; by PKC mark. The segment at 47–71 adopts an NR C4-type zinc-finger fold; the sequence is CPFAGSCEVSKTQRRHCPACRLQKC. Residues 109–348 form the NR LBD domain; that stretch reads EQEELIRTLL…MMPLLQEICS (240 aa).

This sequence belongs to the nuclear hormone receptor family. NR1 subfamily. Heterodimer of NR1I3 and RXR. Interacts with PSMC4. Interacts with ECT2. Directly interacts with DNAJC7; this complex may also include HSP90. Interacts with CRY1. Interacts with CRY2 in a ligand-dependent manner. Phosphorylated at Thr-38 by PKC, dephosphorylation of Thr-38 is required for nuclear translocation and activation.

Its subcellular location is the nucleus. The protein localises to the cytoplasm. The protein resides in the cytoskeleton. In terms of biological role, binds and transactivates the retinoic acid response elements that control expression of the retinoic acid receptor beta 2 and alcohol dehydrogenase 3 genes. Transactivates both the phenobarbital responsive element module of the human CYP2B6 gene and the CYP3A4 xenobiotic response element. The protein is Nuclear receptor subfamily 1 group I member 3 (NR1I3) of Pan troglodytes (Chimpanzee).